The primary structure comprises 202 residues: Oxopyrrolidines biosynthesis cluster protein O (202 aa).

Its function is as follows. Part of the gene cluster that mediates the biosynthesis of oxopyrrolidines, polyketide-amino acid hybrid compounds with feature structures of tetramic acid. Does not seem to play a role in oxopyrrolidines A and B biosynthesis. The polypeptide is Oxopyrrolidines biosynthesis cluster protein O (Penicillium oxalicum (strain 114-2 / CGMCC 5302) (Penicillium decumbens)).